We begin with the raw amino-acid sequence, 508 residues long: Inosine-5'-monophosphate dehydrogenase (508 aa).

CBS domains follow at residues 111 to 170 (FITD…EITL) and 174 to 230 (MTTN…PDAS). Residues Asp267 and 317 to 319 (GMG) contribute to the NAD(+) site. K(+)-binding residues include Gly319 and Gly321. Residue Ser322 participates in IMP binding. Residue Cys324 participates in K(+) binding. Cys324 (thioimidate intermediate) is an active-site residue. IMP contacts are provided by residues 357 to 359 (DGG), 380 to 381 (GF), and 404 to 408 (YRGMA). The active-site Proton acceptor is Arg420. Gln432 contacts IMP. Residue Gly492 coordinates K(+).

It belongs to the IMPDH/GMPR family. In terms of assembly, homotetramer. The cofactor is K(+).

It catalyses the reaction IMP + NAD(+) + H2O = XMP + NADH + H(+). The protein operates within purine metabolism; XMP biosynthesis via de novo pathway; XMP from IMP: step 1/1. With respect to regulation, mycophenolic acid (MPA) is a non-competitive inhibitor that prevents formation of the closed enzyme conformation by binding to the same site as the amobile flap. In contrast, mizoribine monophosphate (MZP) is a competitive inhibitor that induces the closed conformation. MPA is a potent inhibitor of mammalian IMPDHs but a poor inhibitor of the bacterial enzymes. MZP is a more potent inhibitor of bacterial IMPDH. Catalyzes the conversion of inosine 5'-phosphate (IMP) to xanthosine 5'-phosphate (XMP), the first committed and rate-limiting step in the de novo synthesis of guanine nucleotides, and therefore plays an important role in the regulation of cell growth. This chain is Inosine-5'-monophosphate dehydrogenase, found in Leptospira interrogans serogroup Icterohaemorrhagiae serovar Lai (strain 56601).